The following is a 514-amino-acid chain: Butyrophilin subfamily 2 member A2 (514 aa).

An N-terminal signal peptide occupies residues methionine 1–alanine 29. The 113-residue stretch at glutamine 30 to methionine 142 folds into the Ig-like V-type domain. Residues glutamine 30–serine 244 are Extracellular-facing. Asparagine 47 and asparagine 115 each carry an N-linked (GlcNAc...) asparagine glycan. Disulfide bonds link cysteine 52/cysteine 126 and cysteine 166/cysteine 220. The Ig-like C2-type domain occupies proline 150 to glutamate 232. A helical transmembrane segment spans residues leucine 245–threonine 265. Topologically, residues serine 266–proline 514 are cytoplasmic. The stretch at isoleucine 281 to arginine 304 forms a coiled coil. Residues alanine 295–alanine 488 form the B30.2/SPRY domain.

This sequence belongs to the immunoglobulin superfamily. BTN/MOG family. N-glycosylated. Widely expressed (at protein level). In the thymus, restricted to the corticomedullary junction, but not confined solely to epithelial cells (at protein level). Significant expression on naive B-cells, splenic natural killer cells, dendritic cells and peritoneal macrophages (at protein level). Negligible expression on naive T-cells up-regulated on activated T-cells (at protein level).

The protein localises to the membrane. Its function is as follows. Inhibits the proliferation of CD4 and CD8 T-cells activated by anti-CD3 antibodies, T-cell metabolism and IL2 and IFNG secretion. The protein is Butyrophilin subfamily 2 member A2 (Btn2a2) of Mus musculus (Mouse).